The sequence spans 86 residues: MGCCQDKNRWASDEQARDEVTEDGREGNEVDNSGRRKQRSNESLLITVLWRRLSMFSRRESSRSGKQDNQMQERKHEGSHKEPEKG.

Positions 1–34 are enriched in basic and acidic residues; the sequence is MGCCQDKNRWASDEQARDEVTEDGREGNEVDNSG. Disordered regions lie at residues 1-43 and 57-86; these read MGCC…SNES and SRRE…PEKG.

As to expression, expressed in Testis.

The sequence is that of Testis-expressed protein 54 from Mus musculus (Mouse).